The sequence spans 292 residues: tRNA (guanine-N(7)-)-methyltransferase (292 aa).

A disordered region spans residues 1–54 (MLKRDQSEMDIEAETANMGKEEKESFVHKRQKYRQEQEEKRLAAKKGVSFEQPE). Basic and acidic residues predominate over residues 19–42 (GKEEKESFVHKRQKYRQEQEEKRL). S-adenosyl-L-methionine is bound by residues G110, 133–134 (EI), 168–169 (NA), and C188. Residue D191 is part of the active site. 266–268 (TEE) provides a ligand contact to S-adenosyl-L-methionine.

The protein belongs to the class I-like SAM-binding methyltransferase superfamily. TrmB family. Forms a complex with TRM82.

It is found in the nucleus. It catalyses the reaction guanosine(46) in tRNA + S-adenosyl-L-methionine = N(7)-methylguanosine(46) in tRNA + S-adenosyl-L-homocysteine. It functions in the pathway tRNA modification; N(7)-methylguanine-tRNA biosynthesis. Catalyzes the formation of N(7)-methylguanine at position 46 (m7G46) in tRNA. The sequence is that of tRNA (guanine-N(7)-)-methyltransferase from Yarrowia lipolytica (strain CLIB 122 / E 150) (Yeast).